Consider the following 474-residue polypeptide: Gamma-aminobutyric acid receptor subunit beta-1 (474 aa).

A signal peptide spans 1–25 (MWTVQNRESLGLLSFPVMVAMVCCA). Topologically, residues 26–245 (HSSNEPSNMS…SFRLKRNIGY (220 aa)) are extracellular. Residues asparagine 33 and asparagine 105 are each glycosylated (N-linked (GlcNAc...) asparagine). Tyrosine 122 serves as a coordination point for histamine. Cysteine 161 and cysteine 175 are oxidised to a cystine. Asparagine 174 carries an N-linked (GlcNAc...) asparagine glycan. Residues 181-182 (SY) and threonine 227 each bind histamine. 4-aminobutanoate contacts are provided by tyrosine 182 and threonine 227. Transmembrane regions (helical) follow at residues 246–267 (FILQTYMPSTLITILSWVSFWI), 271–293 (ASAARVALGITTVLTMTTISTHL), and 305–327 (AIDIYLMGCFVFVFLALLEYAFV). Residues 328–451 (NYIFFGKGPQ…DLTDVNSIDK (124 aa)) lie on the Cytoplasmic side of the membrane. The helical transmembrane segment at 452–473 (WSRMFFPITFSLFNVVYWLYYV) threads the bilayer.

It belongs to the ligand-gated ion channel (TC 1.A.9) family. Gamma-aminobutyric acid receptor (TC 1.A.9.5) subfamily. GABRB1 sub-subfamily. As to quaternary structure, heteropentamer, formed by a combination of alpha (GABRA1-6), beta (GABRB1-3), gamma (GABRG1-3), delta (GABRD), epsilon (GABRE), rho (GABRR1-3), pi (GABRP) and theta (GABRQ) chains, each subunit exhibiting distinct physiological and pharmacological properties. Binds UBQLN1.

It localises to the postsynaptic cell membrane. The protein resides in the cell membrane. It catalyses the reaction chloride(in) = chloride(out). Its activity is regulated as follows. Potentiated by histamine. Beta subunit of the heteropentameric ligand-gated chloride channel gated by gamma-aminobutyric acid (GABA), a major inhibitory neurotransmitter in the brain. GABA-gated chloride channels, also named GABA(A) receptors (GABAAR), consist of five subunits arranged around a central pore and contain GABA active binding site(s) located at the alpha and beta subunit interface(s). When activated by GABA, GABAARs selectively allow the flow of chloride anions across the cell membrane down their electrochemical gradient. Chloride influx into the postsynaptic neuron following GABAAR opening decreases the neuron ability to generate a new action potential, thereby reducing nerve transmission. Beta-containing GABAARs can simultaneously bind GABA and histamine where histamine binds at the interface of two neighboring beta subunits, which may be involved in the regulation of sleep and wakefulness. This chain is Gamma-aminobutyric acid receptor subunit beta-1, found in Rattus norvegicus (Rat).